The primary structure comprises 527 residues: Catalase (527 aa).

The span at 1-22 (MADSRDPASDQMKLWKEQRAAQ) shows a compositional bias: basic and acidic residues. The interval 1 to 34 (MADSRDPASDQMKLWKEQRAAQKPDVLTTGGGNP) is disordered. An N-acetylalanine modification is found at alanine 2. A Phosphoserine modification is found at serine 9. Lysine 13 bears the N6-succinyllysine mark. Active-site residues include histidine 75 and asparagine 148. Histidine 194, serine 201, arginine 203, and asparagine 213 together coordinate NADP(+). Lysine 221 bears the N6-succinyllysine mark. Lysine 233 bears the N6-acetyllysine mark. The NADP(+) site is built by lysine 237, tryptophan 303, and histidine 305. Tyrosine 358 is a heme binding site. A phosphoserine mark is found at serine 422 and serine 434. 2 positions are modified to N6-acetyllysine; alternate: lysine 449 and lysine 480. N6-succinyllysine; alternate occurs at positions 449 and 480. The residue at position 499 (lysine 499) is an N6-acetyllysine. Threonine 511 carries the phosphothreonine modification. Serine 517 is subject to Phosphoserine. The Microbody targeting signal; atypical motif lies at 524–527 (KANL).

This sequence belongs to the catalase family. Homotetramer. Interacts (via microbody targeting signal) with PEX5, monomeric form interacts with PEX5, leading to its translocation into peroxisomes. The cofactor is heme. Requires NADP(+) as cofactor.

It localises to the peroxisome matrix. It catalyses the reaction 2 H2O2 = O2 + 2 H2O. Functionally, catalyzes the degradation of hydrogen peroxide (H(2)O(2)) generated by peroxisomal oxidases to water and oxygen, thereby protecting cells from the toxic effects of hydrogen peroxide. Promotes growth of cells including T-cells, B-cells, myeloid leukemia cells, melanoma cells, mastocytoma cells and normal and transformed fibroblast cells. The protein is Catalase (CAT) of Canis lupus familiaris (Dog).